The chain runs to 506 residues: MNTMTLTPGQLSLSQLYDVWRHPVQLRLDANAIDGINASVACVNDIVAEGRTAYGINTGFGLLAQTRIADEDLQNLQRSLVLSHAAGVGDPLDDAMVRLIMVLKINSLARGFSGIRLSVIEALIALVNAGVYPLILAKGSVGASGDLAPLAHLSLTLLGEGKARWQGEWLPAQTALKKAGLEPVALAAKEGLALLNGTQASTAFALRGLFEAQELFASAVVCGALTTEAVLGSRRPFDARIHAARGQQGQIDVARLFRHLLTDTSAIAESHHHCHKVQDPYSLRCQPQVMGACLTQLRQTKEVLLAEANAVSDNPLVFADAGEVISGGNFHAEPVAMAADNLALAIAEIGALSERRIALMMDKHMSQLPPFLVKNGGVNSGFMIAQVTAAALASENKALAHPHSVDSLPTSANQEDHVSMAPAAGRRLWEMAANTRGIIAVEWLAACQGIDLREGLTSSPLLEQARQTLREQVAHYTQDRFFAPDIECATALLAQGALQRLVPDFM.

Positions 143 to 145 form a cross-link, 5-imidazolinone (Ala-Gly); the sequence is ASG. Ser-144 bears the 2,3-didehydroalanine (Ser) mark.

The protein belongs to the PAL/histidase family. In terms of processing, contains an active site 4-methylidene-imidazol-5-one (MIO), which is formed autocatalytically by cyclization and dehydration of residues Ala-Ser-Gly.

The protein localises to the cytoplasm. It carries out the reaction L-histidine = trans-urocanate + NH4(+). The protein operates within amino-acid degradation; L-histidine degradation into L-glutamate; N-formimidoyl-L-glutamate from L-histidine: step 1/3. The sequence is that of Histidine ammonia-lyase from Salmonella agona (strain SL483).